Consider the following 263-residue polypeptide: 3-methyl-2-oxobutanoate hydroxymethyltransferase (263 aa).

Positions 45 and 84 each coordinate Mg(2+). 3-methyl-2-oxobutanoate is bound by residues 45 to 46 (DS), Asp84, and Lys112. Glu114 is a binding site for Mg(2+). Glu180 serves as the catalytic Proton acceptor.

It belongs to the PanB family. In terms of assembly, homodecamer; pentamer of dimers. Requires Mg(2+) as cofactor.

Its subcellular location is the cytoplasm. The catalysed reaction is 3-methyl-2-oxobutanoate + (6R)-5,10-methylene-5,6,7,8-tetrahydrofolate + H2O = 2-dehydropantoate + (6S)-5,6,7,8-tetrahydrofolate. It participates in cofactor biosynthesis; (R)-pantothenate biosynthesis; (R)-pantoate from 3-methyl-2-oxobutanoate: step 1/2. In terms of biological role, catalyzes the reversible reaction in which hydroxymethyl group from 5,10-methylenetetrahydrofolate is transferred onto alpha-ketoisovalerate to form ketopantoate. This Salmonella paratyphi C (strain RKS4594) protein is 3-methyl-2-oxobutanoate hydroxymethyltransferase.